The sequence spans 534 residues: Acyl-CoA-binding domain-containing protein 5 (534 aa).

Residues 41–130 (HETRFEAAVK…MKKIIETMPM (90 aa)) form the ACB domain. 52–61 (IQSLPKNGSF) lines the an acyl-CoA pocket. Pro63 carries the post-translational modification Phosphothreonine. An acyl-CoA contacts are provided by residues 72–76 (YSFYK), Lys98, and Tyr117. Phosphothreonine is present on residues Leu137 and Glu172. A disordered region spans residues 181–225 (TPNAKTVNGKAESSDSGAESEEEEAQEEVKGAEQSDNDKKMMKKS). The stretch at 190-219 (KAESSDSGAESEEEEAQEEVKGAEQSDNDK) forms a coiled coil. Phosphoserine occurs at positions 193, 194, 196, 200, 215, 279, and 313. Residues 207–225 (EEVKGAEQSDNDKKMMKKS) show a composition bias toward basic and acidic residues. Basic and acidic residues predominate over residues 376 to 385 (EVKHGGEDGR). The segment at 376-442 (EVKHGGEDGR…ERWGSDRGSR (67 aa)) is disordered. Thr400 bears the Phosphothreonine mark. Phosphoserine is present on Ser428. The segment covering 431–441 (DGERWGSDRGS) has biased composition (basic and acidic residues). A coiled-coil region spans residues 447 to 476 (EQIALVLMRLQEDMQNVLQRLQKLETLTAL). Residue Lys469 is modified to N6-acetyllysine. The chain crosses the membrane as a helical span at residues 506–526 (GVLTFAIIWPFIAQWLVYLYY).

It belongs to the ATG37 family.

It localises to the peroxisome membrane. Its function is as follows. Acyl-CoA binding protein which acts as the peroxisome receptor for pexophagy but is dispensable for aggrephagy and nonselective autophagy. Binds medium- and long-chain acyl-CoA esters. This chain is Acyl-CoA-binding domain-containing protein 5 (ACBD5), found in Homo sapiens (Human).